The sequence spans 39 residues: U-limacoditoxin(13)-As54 (39 aa).

Residues 1–23 (MSKYIVLLVVSAIALLQFSMIEC) form the signal peptide. Phe-37 carries the phenylalanine amide modification.

It belongs to the FARP (FMRFamide related peptide) family. In terms of tissue distribution, expressed by the venom secretory cell of the spine. The spine is a cuticular structure containing a single large nucleated venom-secreting cell at its base. It is an independent unit capable of producing, storing and injecting venom. On the back of A.stimulea caterpillars, spines are grouped together by 50 to 100 to form scoli, of which there are eight.

Its subcellular location is the secreted. In terms of biological role, strongly activates (at 30 uM) the human neuropeptide FF receptor 1 (NPFF1R), a G-protein coupled receptor, with an effect that is equipotent to the endogenous RFRP-1 ligand in activating NPFFR1. Is toxic when injected into Drosophila melanogaster. Also shows a moderate anthelmintic activity against the parasitic nematode H.contortus (drug susceptible Kirby isolate) (IC(50)=20.1 uM). The polypeptide is U-limacoditoxin(13)-As54 (Acharia stimulea (Saddleback caterpillar moth)).